The chain runs to 354 residues: S-adenosylmethionine:tRNA ribosyltransferase-isomerase (354 aa).

It belongs to the QueA family. Monomer.

Its subcellular location is the cytoplasm. The catalysed reaction is 7-aminomethyl-7-carbaguanosine(34) in tRNA + S-adenosyl-L-methionine = epoxyqueuosine(34) in tRNA + adenine + L-methionine + 2 H(+). The protein operates within tRNA modification; tRNA-queuosine biosynthesis. Transfers and isomerizes the ribose moiety from AdoMet to the 7-aminomethyl group of 7-deazaguanine (preQ1-tRNA) to give epoxyqueuosine (oQ-tRNA). This is S-adenosylmethionine:tRNA ribosyltransferase-isomerase from Salmonella paratyphi C (strain RKS4594).